The primary structure comprises 175 residues: Glycine-rich RNA-binding protein 1 (175 aa).

Residues 3–81 enclose the RRM domain; it reads AKVYVGNLSW…RRIRVNMANS (79 aa). A disordered region spans residues 114–175; sequence GQPGGFQQPG…GYGGYNGQSQ (62 aa). Over residues 122–131 the composition is skewed to low complexity; the sequence is PGGFQQQGGY. The span at 132 to 141 shows a compositional bias: gly residues; sequence PQQGGYGGYQ. Low complexity predominate over residues 142–162; the sequence is QPGFQPQQGGYGAPQQGYGAP. The span at 163-175 shows a compositional bias: gly residues; that stretch reads QQGGYGGYNGQSQ.

Belongs to the glycine-rich RNA-binding protein family. In terms of assembly, part of large ribonucleoprotein complexes (mRNPs) containing RNA-binding proteins RRM4 and PAB1, endosome-binding protein UPA1, core scaffold protein UPA2 and associated factor GRP1.

It localises to the endosome. Functionally, component of endosomal mRNA transport that regulates polarity of the infectious hyphae by transporting a broad spectrum of cargo mRNAs from the nucleus to cell poles. This chain is Glycine-rich RNA-binding protein 1, found in Mycosarcoma maydis (Corn smut fungus).